A 537-amino-acid polypeptide reads, in one-letter code: uncharacterized protein (537 aa).

This is an uncharacterized protein from Mycobacterium bovis (strain ATCC BAA-935 / AF2122/97).